The chain runs to 312 residues: Olfactory receptor 6N1 (312 aa).

Topologically, residues M1–I25 are extracellular. An N-linked (GlcNAc...) asparagine glycan is attached at N5. Residues Y26–F46 traverse the membrane as a helical segment. The Cytoplasmic portion of the chain corresponds to L47–R54. A helical membrane pass occupies residues L55–A75. Topologically, residues A76–L99 are extracellular. Residues C97 and C189 are joined by a disulfide bond. The helical transmembrane segment at Q100 to Y120 threads the bilayer. Over D121 to T139 the chain is Cytoplasmic. The chain crosses the membrane as a helical span at residues L140 to I160. The Extracellular segment spans residues S161–L197. Residues V198–S217 form a helical membrane-spanning segment. Over Y218 to A237 the chain is Cytoplasmic. Residues I238–M258 form a helical membrane-spanning segment. At Y259–D271 the chain is on the extracellular side. A helical transmembrane segment spans residues Q272–L292. Residues R293–A312 lie on the Cytoplasmic side of the membrane.

The protein belongs to the G-protein coupled receptor 1 family.

It is found in the cell membrane. Its function is as follows. Odorant receptor. The chain is Olfactory receptor 6N1 (OR6N1) from Homo sapiens (Human).